We begin with the raw amino-acid sequence, 714 residues long: Polyribonucleotide nucleotidyltransferase (714 aa).

Asp-493 and Asp-499 together coordinate Mg(2+). The KH domain maps to 559–618 (PRIETTKIPADRIGELIGPGGKNIKAIQAESGADINIEEDGTVHIYAAKQEGLDRALELV). The S1 motif domain occupies 628–696 (GELYTGKIVS…DKGRVKMSIR (69 aa)).

Belongs to the polyribonucleotide nucleotidyltransferase family. The cofactor is Mg(2+).

It is found in the cytoplasm. The catalysed reaction is RNA(n+1) + phosphate = RNA(n) + a ribonucleoside 5'-diphosphate. In terms of biological role, involved in mRNA degradation. Catalyzes the phosphorolysis of single-stranded polyribonucleotides processively in the 3'- to 5'-direction. In Akkermansia muciniphila (strain ATCC BAA-835 / DSM 22959 / JCM 33894 / BCRC 81048 / CCUG 64013 / CIP 107961 / Muc), this protein is Polyribonucleotide nucleotidyltransferase.